A 259-amino-acid polypeptide reads, in one-letter code: Phosphate import ATP-binding protein PstB 1 (259 aa).

The ABC transporter domain occupies 13 to 254; that stretch reads IQVRGLEFFY…PSKTQTEDYI (242 aa). 45–52 serves as a coordination point for ATP; the sequence is GPSGCGKS.

It belongs to the ABC transporter superfamily. Phosphate importer (TC 3.A.1.7) family. The complex is composed of two ATP-binding proteins (PstB), two transmembrane proteins (PstC and PstA) and a solute-binding protein (PstS).

It is found in the cell inner membrane. It carries out the reaction phosphate(out) + ATP + H2O = ADP + 2 phosphate(in) + H(+). In terms of biological role, part of the ABC transporter complex PstSACB involved in phosphate import. Responsible for energy coupling to the transport system. The protein is Phosphate import ATP-binding protein PstB 1 of Pseudomonas savastanoi pv. phaseolicola (strain 1448A / Race 6) (Pseudomonas syringae pv. phaseolicola (strain 1448A / Race 6)).